The following is a 360-amino-acid chain: DNA replication and repair protein RecF (360 aa).

Residue 33-40 coordinates ATP; the sequence is GENGSGKT.

Belongs to the RecF family.

The protein resides in the cytoplasm. In terms of biological role, the RecF protein is involved in DNA metabolism; it is required for DNA replication and normal SOS inducibility. RecF binds preferentially to single-stranded, linear DNA. It also seems to bind ATP. The chain is DNA replication and repair protein RecF from Rickettsia akari (strain Hartford).